We begin with the raw amino-acid sequence, 170 residues long: Adenine phosphoribosyltransferase (170 aa).

This sequence belongs to the purine/pyrimidine phosphoribosyltransferase family. Homodimer.

It localises to the cytoplasm. The enzyme catalyses AMP + diphosphate = 5-phospho-alpha-D-ribose 1-diphosphate + adenine. The protein operates within purine metabolism; AMP biosynthesis via salvage pathway; AMP from adenine: step 1/1. Functionally, catalyzes a salvage reaction resulting in the formation of AMP, that is energically less costly than de novo synthesis. This chain is Adenine phosphoribosyltransferase, found in Nitrosopumilus maritimus (strain SCM1).